Here is a 211-residue protein sequence, read N- to C-terminus: Guanylate kinase (211 aa).

A Guanylate kinase-like domain is found at 5-185; it reads GLLLILSSPS…AEEQLKMILS (181 aa). 12 to 19 is a binding site for ATP; the sequence is SPSGAGKS.

This sequence belongs to the guanylate kinase family.

Its subcellular location is the cytoplasm. The catalysed reaction is GMP + ATP = GDP + ADP. Its function is as follows. Essential for recycling GMP and indirectly, cGMP. The chain is Guanylate kinase from Cereibacter sphaeroides (strain ATCC 17023 / DSM 158 / JCM 6121 / CCUG 31486 / LMG 2827 / NBRC 12203 / NCIMB 8253 / ATH 2.4.1.) (Rhodobacter sphaeroides).